The primary structure comprises 411 residues: Metacaspase-1B (411 aa).

Positions 1–97 (MYHRHSAPPP…PPLEAQQFGN (97 aa)) are disordered. A compositionally biased stretch (pro residues) spans 7-65 (APPPPGRSRGYPPPQQQWPPQPYQYLPYPPQGPPPAHTFPPPAHRSYPSPYPTPPPHSP). Catalysis depends on residues histidine 198 and cysteine 254.

It belongs to the peptidase C14B family.

Functionally, involved in cell death (apoptosis). This is Metacaspase-1B (casB) from Neosartorya fischeri (strain ATCC 1020 / DSM 3700 / CBS 544.65 / FGSC A1164 / JCM 1740 / NRRL 181 / WB 181) (Aspergillus fischerianus).